We begin with the raw amino-acid sequence, 699 residues long: Extracellular matrix protein 2 (699 aa).

A signal peptide spans 1–20 (MKIAVLFCFFLLIIFQTDFG). The VWFC domain occupies 101–158 (GHCLVKGITMYNKAVWSPEPCTTCLCSDGRVLCDETMCHPQRCPQTVIPEGECCPVCS). The segment covering 176–186 (EFSGDSSEQRE) has biased composition (basic and acidic residues). The interval 176–316 (EFSGDSSEQR…PAPPRGTLRL (141 aa)) is disordered. The span at 212 to 224 (QSEEDEEVKEEDT) shows a compositional bias: acidic residues. Residues 243–260 (GDSRGGDRKQRPGEERRL) are compositionally biased toward basic and acidic residues. The segment covering 270–291 (EEEEDEEEEGEEGEEDEEDEED) has biased composition (acidic residues). Residues 294-296 (RGD) carry the Cell attachment site motif. The LRRNT domain maps to 307 to 344 (PAPPRGTLRLPSGCSLSYRTISCINAMLTQIPPLTAPQ). LRR repeat units lie at residues 368–388 (NLER…GPKA), 394–415 (KLMR…LPST), 416–436 (LEEL…SLSD), 439–459 (QLVT…NPLA), 465–484 (SLAY…QGLP), 486–507 (SIEE…CFNH), 510–530 (KINV…APLA), 536–557 (NLES…LPKS), 558–578 (LLHL…VFGH), 582–602 (GLEY…DRVS), 609–630 (SLRE…IQEM), 632–653 (ALHF…EICN), and 661–684 (NLEH…TFSC). N-linked (GlcNAc...) asparagine glycosylation is present at Asn378. An N-linked (GlcNAc...) asparagine glycan is attached at Asn449. N-linked (GlcNAc...) asparagine glycosylation is present at Asn506.

This sequence belongs to the small leucine-rich proteoglycan (SLRP) family. SLRP class I subfamily. Interacts with numerous extracellular matrix proteins. Interacts with MSL1 and RASSF1. Expressed predominantly in adipose tissue as well as female-specific organs such as mammary gland, ovary, and uterus.

The protein localises to the secreted. The protein resides in the extracellular space. It localises to the extracellular matrix. Its function is as follows. Promotes matrix assembly and cell adhesiveness. This chain is Extracellular matrix protein 2 (ECM2), found in Homo sapiens (Human).